The chain runs to 74 residues: Cytochrome b (74 aa).

Residues 34 to 54 (FGSLLAICLVTQILTGLLLAM) form a helical membrane-spanning segment.

This sequence belongs to the cytochrome b family. In terms of assembly, the cytochrome bc1 complex contains 11 subunits: 3 respiratory subunits (MT-CYB, CYC1 and UQCRFS1), 2 core proteins (UQCRC1 and UQCRC2) and 6 low-molecular weight proteins (UQCRH/QCR6, UQCRB/QCR7, UQCRQ/QCR8, UQCR10/QCR9, UQCR11/QCR10 and a cleavage product of UQCRFS1). This cytochrome bc1 complex then forms a dimer. Requires heme as cofactor.

The protein localises to the mitochondrion inner membrane. Its function is as follows. Component of the ubiquinol-cytochrome c reductase complex (complex III or cytochrome b-c1 complex) that is part of the mitochondrial respiratory chain. The b-c1 complex mediates electron transfer from ubiquinol to cytochrome c. Contributes to the generation of a proton gradient across the mitochondrial membrane that is then used for ATP synthesis. The chain is Cytochrome b (MT-CYB) from Anser caerulescens (Snow goose).